The sequence spans 715 residues: Arginine kinase (715 aa).

Approximate repeat units lie at residues Met1–Lys366 and Arg367–Lys715. The Phosphagen kinase N-terminal 1 domain maps to Lys11–Ser95. A substrate-binding site is contributed by Gly68 to Tyr72. The 240-residue stretch at Tyr123–Ala362 folds into the Phosphagen kinase C-terminal 1 domain. Residues Ser126 to Arg130 and His189 each bind ATP. A substrate-binding site is contributed by Glu229. Arg233 contacts ATP. Cys275 contacts substrate. Residues Arg284–His288 and Arg312–Glu317 contribute to the ATP site. Position 317 (Glu317) interacts with substrate. Residues Lys365–Ser447 form the Phosphagen kinase N-terminal 2 domain. A Phosphagen kinase C-terminal 2 domain is found at Tyr475–Thr714.

The protein belongs to the ATP:guanido phosphotransferase family. In terms of assembly, monomer.

The catalysed reaction is L-arginine + ATP = N(omega)-phospho-L-arginine + ADP + H(+). This Anthopleura japonica (Sea anemone) protein is Arginine kinase.